The primary structure comprises 575 residues: Hemagglutinin-neuraminidase (575 aa).

Residues Met-1–Ser-10 show a composition bias toward basic and acidic residues. A disordered region spans residues Met-1–Ala-24. The Intravirion portion of the chain corresponds to Met-1–Leu-37. The segment at Ser-10–Thr-14 is incorporation in virion. Residues Tyr-11–Leu-23 show a composition bias toward polar residues. Residues Leu-38 to Ile-58 traverse the membrane as a helical segment. The tract at residues Ser-59–Ser-140 is involved in interaction with F protein. The Virion surface portion of the chain corresponds to Ser-59–Ser-575. An N-linked (GlcNAc...) asparagine; by host glycan is attached at Asn-77. Cystine bridges form between Cys-192-Cys-216, Cys-258-Cys-271, Cys-357-Cys-469, and Cys-463-Cys-473. An involved in neuraminidase activity region spans residues Asn-254–Ser-259. Residues Asn-499 and Asn-511 are each glycosylated (N-linked (GlcNAc...) asparagine; by host). A disulfide bond links Cys-535 and Cys-544.

It belongs to the paramyxoviruses hemagglutinin-neuraminidase family. In terms of assembly, homotetramer; composed of disulfide-linked homodimers. Interacts with F protein trimer. Post-translationally, N-glycosylated; glycans consist of a mixture of high mannose-type oligosaccharides and of complex-type oligosaccharides.

The protein resides in the virion membrane. It is found in the host cell membrane. It catalyses the reaction Hydrolysis of alpha-(2-&gt;3)-, alpha-(2-&gt;6)-, alpha-(2-&gt;8)- glycosidic linkages of terminal sialic acid residues in oligosaccharides, glycoproteins, glycolipids, colominic acid and synthetic substrates.. Its function is as follows. Attaches the virus to sialic acid-containing cell receptors and thereby initiating infection. Binding of HN protein to the receptor induces a conformational change that allows the F protein to trigger virion/cell membranes fusion. In terms of biological role, neuraminidase activity ensures the efficient spread of the virus by dissociating the mature virions from the neuraminic acid containing glycoproteins. This Sendai virus (strain Fushimi) (SeV) protein is Hemagglutinin-neuraminidase (HN).